The sequence spans 432 residues: Trigger factor (432 aa).

The PPIase FKBP-type domain occupies Glu161 to Pro246.

The protein belongs to the FKBP-type PPIase family. Tig subfamily. In terms of assembly, homodimer and monomer. In vivo most of the ribosomes are in complex with monomeric TF. Uncomplexed TF, however, is in a monomer-dimer equilibrium with approximately two thirds of TF existing in a dimeric state.

The protein resides in the cytoplasm. The catalysed reaction is [protein]-peptidylproline (omega=180) = [protein]-peptidylproline (omega=0). Functionally, involved in protein export. Acts as a chaperone by maintaining the newly synthesized protein in an open conformation. Functions as a peptidyl-prolyl cis-trans isomerase. This Escherichia coli O6:K15:H31 (strain 536 / UPEC) protein is Trigger factor.